A 120-amino-acid chain; its full sequence is Insulin-like peptide 3 (120 aa).

The N-terminal stretch at 1–29 (MGIEMRCQDRRILLPSLLLLILMIGGVQA) is a signal peptide. Cystine bridges form between cysteine 34-cysteine 101, cysteine 46-cysteine 114, and cysteine 100-cysteine 105. A propeptide spans 51–89 (NAMTKRTLDPVNFNQIDGFEDRSLLERLLSDSSVQMLKT) (connecting peptide).

It belongs to the insulin family. As to quaternary structure, heterodimer of a B chain and an A chain linked by two disulfide bonds. Expressed at a high level in seven cells of each larval brain hemisphere that may correspond to neurosecretory cells.

It is found in the secreted. Functionally, possible ligand of InR/insulin-like receptor. The protein is Insulin-like peptide 3 of Drosophila melanogaster (Fruit fly).